We begin with the raw amino-acid sequence, 250 residues long: Beta-crystallin B1 (250 aa).

Residues 1-47 (MSQVAKAAATTAVNPGPDGKGKGTPSTGTAPAPGPTPVPASVPRPAA) form a disordered region. Position 2 is an N-acetylserine (Ser-2). An N-terminal arm region spans residues 2 to 56 (SQVAKAAATTAVNPGPDGKGKGTPSTGTAPAPGPTPVPASVPRPAAKVGELPPGS). The span at 32–42 (APGPTPVPASV) shows a compositional bias: pro residues. 2 Beta/gamma crystallin 'Greek key' domains span residues 57–96 (YRLV…IVLS) and 97–141 (GPWV…RPIR). A connecting peptide region spans residues 142–146 (MDSQE). 2 Beta/gamma crystallin 'Greek key' domains span residues 147–188 (HKIC…TVSS) and 189–231 (GTWV…RRLR). The tract at residues 233-250 (RQWHQEGCFPVLTAEPPK) is C-terminal arm.

Belongs to the beta/gamma-crystallin family. As to quaternary structure, homo/heterodimer, or complexes of higher-order. The structure of beta-crystallin oligomers seems to be stabilized through interactions between the N-terminal arms. Specific cleavages in the N-terminal arm occur during lens maturation and give rise to truncated forms, leading to impaired oligomerization and protein insolubilization. The protease responsible for this partial degradation could be calpain II.

Functionally, crystallins are the dominant structural components of the vertebrate eye lens. This Rattus norvegicus (Rat) protein is Beta-crystallin B1 (Crybb1).